Here is a 296-residue protein sequence, read N- to C-terminus: NAD kinase (296 aa).

D72 serves as the catalytic Proton acceptor. NAD(+) contacts are provided by residues D72–G73, N146–D147, R157, K174, D176, T187–S192, and Q247.

It belongs to the NAD kinase family. It depends on a divalent metal cation as a cofactor.

It is found in the cytoplasm. It catalyses the reaction NAD(+) + ATP = ADP + NADP(+) + H(+). Functionally, involved in the regulation of the intracellular balance of NAD and NADP, and is a key enzyme in the biosynthesis of NADP. Catalyzes specifically the phosphorylation on 2'-hydroxyl of the adenosine moiety of NAD to yield NADP. The chain is NAD kinase from Pseudomonas entomophila (strain L48).